The sequence spans 643 residues: Replication protein E1 (643 aa).

The Nuclear localization signal signature appears at Lys83–Lys85. Phosphoserine; by host is present on residues Ser89, Ser93, and Ser107. Residues Leu106–Leu115 carry the Nuclear export signal motif. Residues Ala155 to Pro184 form a disordered region. A DNA-binding region region spans residues Thr180–Asp346. An SF3 helicase domain is found at Ile445–Val595. Gly471–Ser478 lines the ATP pocket. Residue Lys552 forms a Glycyl lysine isopeptide (Lys-Gly) (interchain with G-Cter in SUMO) linkage.

Belongs to the papillomaviridae E1 protein family. In terms of assembly, can form hexamers. Interacts with E2 protein; this interaction increases E1 DNA binding specificity. Interacts with host DNA polymerase subunit POLA2. Interacts with host single stranded DNA-binding protein RPA1. Interacts with host TOP1; this interaction stimulates the enzymatic activity of TOP1. In terms of processing, phosphorylated. Sumoylated.

It is found in the host nucleus. It carries out the reaction Couples ATP hydrolysis with the unwinding of duplex DNA by translocating in the 3'-5' direction.. The enzyme catalyses ATP + H2O = ADP + phosphate + H(+). In terms of biological role, ATP-dependent DNA 3'-5' helicase required for initiation of viral DNA replication. It forms a complex with the viral E2 protein. The E1-E2 complex binds to the replication origin which contains binding sites for both proteins. During the initial step, a dimer of E1 interacts with a dimer of protein E2 leading to a complex that binds the viral origin of replication with high specificity. Then, a second dimer of E1 displaces the E2 dimer in an ATP-dependent manner to form the E1 tetramer. Following this, two E1 monomers are added to each half of the site, which results in the formation of two E1 trimers on the viral ori. Subsequently, two hexamers will be created. The double hexamer acts as a bi-directional helicase machinery and unwinds the viral DNA and then recruits the host DNA polymerase to start replication. This Human papillomavirus 42 protein is Replication protein E1.